We begin with the raw amino-acid sequence, 21 residues long: Protein YadW (21 aa).

This chain is Protein YadW, found in Escherichia coli (strain K12).